A 94-amino-acid chain; its full sequence is Co-chaperonin GroES (94 aa).

Belongs to the GroES chaperonin family. In terms of assembly, heptamer of 7 subunits arranged in a ring. Interacts with the chaperonin GroEL.

It is found in the cytoplasm. In terms of biological role, together with the chaperonin GroEL, plays an essential role in assisting protein folding. The GroEL-GroES system forms a nano-cage that allows encapsulation of the non-native substrate proteins and provides a physical environment optimized to promote and accelerate protein folding. GroES binds to the apical surface of the GroEL ring, thereby capping the opening of the GroEL channel. This chain is Co-chaperonin GroES, found in Streptococcus pneumoniae serotype 19F (strain G54).